Reading from the N-terminus, the 321-residue chain is Aspartate carbamoyltransferase catalytic subunit (321 aa).

Carbamoyl phosphate contacts are provided by arginine 65 and threonine 66. Lysine 93 provides a ligand contact to L-aspartate. 3 residues coordinate carbamoyl phosphate: arginine 115, histidine 143, and glutamine 146. L-aspartate contacts are provided by arginine 176 and arginine 230. Residues glycine 271 and proline 272 each contribute to the carbamoyl phosphate site.

It belongs to the aspartate/ornithine carbamoyltransferase superfamily. ATCase family. Heterododecamer (2C3:3R2) of six catalytic PyrB chains organized as two trimers (C3), and six regulatory PyrI chains organized as three dimers (R2).

The catalysed reaction is carbamoyl phosphate + L-aspartate = N-carbamoyl-L-aspartate + phosphate + H(+). It participates in pyrimidine metabolism; UMP biosynthesis via de novo pathway; (S)-dihydroorotate from bicarbonate: step 2/3. Catalyzes the condensation of carbamoyl phosphate and aspartate to form carbamoyl aspartate and inorganic phosphate, the committed step in the de novo pyrimidine nucleotide biosynthesis pathway. This chain is Aspartate carbamoyltransferase catalytic subunit, found in Bartonella quintana (strain Toulouse) (Rochalimaea quintana).